The following is a 159-amino-acid chain: D-aminoacyl-tRNA deacylase (159 aa).

The Gly-cisPro motif, important for rejection of L-amino acids signature appears at 142-143 (GP).

It belongs to the DTD family. Homodimer.

It localises to the cytoplasm. The catalysed reaction is glycyl-tRNA(Ala) + H2O = tRNA(Ala) + glycine + H(+). The enzyme catalyses a D-aminoacyl-tRNA + H2O = a tRNA + a D-alpha-amino acid + H(+). Its function is as follows. An aminoacyl-tRNA editing enzyme that deacylates mischarged D-aminoacyl-tRNAs. Also deacylates mischarged glycyl-tRNA(Ala), protecting cells against glycine mischarging by AlaRS. Acts via tRNA-based rather than protein-based catalysis; rejects L-amino acids rather than detecting D-amino acids in the active site. By recycling D-aminoacyl-tRNA to D-amino acids and free tRNA molecules, this enzyme counteracts the toxicity associated with the formation of D-aminoacyl-tRNA entities in vivo and helps enforce protein L-homochirality. The sequence is that of D-aminoacyl-tRNA deacylase from Albidiferax ferrireducens (strain ATCC BAA-621 / DSM 15236 / T118) (Rhodoferax ferrireducens).